Consider the following 397-residue polypeptide: N(6)-adenosine-methyltransferase non-catalytic subunit METTL14 (397 aa).

2 disordered regions span residues 37 to 67 (NAEDINSSRQLNSGGQREEEDGGASSSKKTP) and 368 to 397 (ELLRPKSPPPNSKVLRGRGRGFPRGRGRPR). Polar residues predominate over residues 40–51 (DINSSRQLNSGG). A compositionally biased stretch (basic residues) spans 382-397 (LRGRGRGFPRGRGRPR).

The protein belongs to the MT-A70-like family. As to quaternary structure, component of the WMM complex, a N6-methyltransferase complex composed of a catalytic subcomplex, named MAC, and of an associated subcomplex, named MACOM. The MAC subcomplex is composed of Ime4/Mettl3 and Mettl14. The MACOM subcomplex is composed of fl(2)d, Flacc/Xio, Hakai, vir, and, in some cases of nito.

It localises to the nucleus. Functionally, non-catalytic component of the WMM complex, a complex that mediates N6-methyladenosine (m6A) methylation of mRNAs, a modification that plays a role in the efficiency of mRNA splicing and is required for sex determination. In the heterodimer formed with Ime4/Mettl3, Mettl14 constitutes the RNA-binding scaffold that recognizes the substrate rather than the catalytic core. Required for sex determination and dosage compensation via Sxl alternative splicing: m6A methylation acts as a key regulator of Sxl pre-mRNA and promotes female-specific alternative splicing of Sxl, which determines female physiognomy. M6A methylation is also required for neuronal functions. This Drosophila melanogaster (Fruit fly) protein is N(6)-adenosine-methyltransferase non-catalytic subunit METTL14.